A 299-amino-acid chain; its full sequence is Apolipoprotein E (299 aa).

The signal sequence occupies residues M1–A18. 7 consecutive repeat copies span residues L74–A95, P96–G117, A118–G139, Q140–L161, R162–E183, R184–A205, and G224–E245. The segment at L74–E245 is 8 X 22 AA approximate tandem repeats. A Methionine sulfoxide modification is found at M137. A Phosphoserine modification is found at S141. Residues H152–R162 are LDL and other lipoprotein receptors binding. M156 to R159 contributes to the heparin binding site. The tract at residues S204 to M273 is lipid-binding and lipoprotein association. Residue G219–L226 coordinates heparin. The interval R261–M273 is specificity for association with VLDL.

Belongs to the apolipoprotein A1/A4/E family. As to quaternary structure, homotetramer. May interact with ABCA1; functionally associated with ABCA1 in the biogenesis of HDLs. May interact with APP/A4 amyloid-beta peptide; the interaction is extremely stable in vitro but its physiological significance is unclear. May interact with MAPT. May interact with MAP2. In the cerebrospinal fluid, interacts with secreted SORL1. Interacts with PMEL; this allows the loading of PMEL luminal fragment on ILVs to induce fibril nucleation. Post-translationally, APOE exists as multiple glycosylated and sialylated glycoforms within cells and in plasma. The extent of glycosylation and sialylation are tissue and context specific. Glycated in plasma VLDL. In terms of processing, phosphorylated by FAM20C in the extracellular medium.

The protein localises to the secreted. It localises to the extracellular space. It is found in the extracellular matrix. Its subcellular location is the extracellular vesicle. The protein resides in the endosome. The protein localises to the multivesicular body. Its function is as follows. APOE is an apolipoprotein, a protein associating with lipid particles, that mainly functions in lipoprotein-mediated lipid transport between organs via the plasma and interstitial fluids. APOE is a core component of plasma lipoproteins and is involved in their production, conversion and clearance. Apolipoproteins are amphipathic molecules that interact both with lipids of the lipoprotein particle core and the aqueous environment of the plasma. As such, APOE associates with chylomicrons, chylomicron remnants, very low density lipoproteins (VLDL) and intermediate density lipoproteins (IDL) but shows a preferential binding to high-density lipoproteins (HDL). It also binds a wide range of cellular receptors including the LDL receptor/LDLR, the LDL receptor-related proteins LRP1, LRP2 and LRP8 and the very low-density lipoprotein receptor/VLDLR that mediate the cellular uptake of the APOE-containing lipoprotein particles. Finally, APOE also has a heparin-binding activity and binds heparan-sulfate proteoglycans on the surface of cells, a property that supports the capture and the receptor-mediated uptake of APOE-containing lipoproteins by cells. A main function of APOE is to mediate lipoprotein clearance through the uptake of chylomicrons, VLDLs, and HDLs by hepatocytes. APOE is also involved in the biosynthesis by the liver of VLDLs as well as their uptake by peripheral tissues ensuring the delivery of triglycerides and energy storage in muscle, heart and adipose tissues. By participating in the lipoprotein-mediated distribution of lipids among tissues, APOE plays a critical role in plasma and tissues lipid homeostasis. APOE is also involved in two steps of reverse cholesterol transport, the HDLs-mediated transport of cholesterol from peripheral tissues to the liver, and thereby plays an important role in cholesterol homeostasis. First, it is functionally associated with ABCA1 in the biogenesis of HDLs in tissues. Second, it is enriched in circulating HDLs and mediates their uptake by hepatocytes. APOE also plays an important role in lipid transport in the central nervous system, regulating neuron survival and sprouting. The protein is Apolipoprotein E (APOE) of Erethizon dorsatum (North American porcupine).